The chain runs to 294 residues: N-acetylmuramic acid 6-phosphate etherase (294 aa).

In terms of domain architecture, SIS spans 56 to 219; sequence TSYSLRNGGR…STLSMVSVGK (164 aa). E84 (proton donor) is an active-site residue. E115 is an active-site residue.

Belongs to the GCKR-like family. MurNAc-6-P etherase subfamily. Homodimer.

It carries out the reaction N-acetyl-D-muramate 6-phosphate + H2O = N-acetyl-D-glucosamine 6-phosphate + (R)-lactate. Its pathway is amino-sugar metabolism; 1,6-anhydro-N-acetylmuramate degradation. It functions in the pathway amino-sugar metabolism; N-acetylmuramate degradation. The protein operates within cell wall biogenesis; peptidoglycan recycling. Its function is as follows. Specifically catalyzes the cleavage of the D-lactyl ether substituent of MurNAc 6-phosphate, producing GlcNAc 6-phosphate and D-lactate. Together with AnmK, is also required for the utilization of anhydro-N-acetylmuramic acid (anhMurNAc) either imported from the medium or derived from its own cell wall murein, and thus plays a role in cell wall recycling. The polypeptide is N-acetylmuramic acid 6-phosphate etherase (Francisella tularensis subsp. holarctica (strain LVS)).